A 906-amino-acid chain; its full sequence is Rho GTPase-activating protein gacJ (906 aa).

Positions 53 to 117 are disordered; the sequence is LEGHLNPSSH…RDNSRSDNIR (65 aa). Positions 69-79 are enriched in low complexity; that stretch reads NNNNNNNNNNN. The segment covering 92 to 117 has biased composition (basic and acidic residues); the sequence is SRSDSKHHNRENSKSDRDNSRSDNIR. Positions 161–348 constitute a Rho-GAP domain; that stretch reads EELQSLYPDQ…YMLEYFNDIF (188 aa). Disordered stretches follow at residues 368-415, 452-864, and 877-906; these read DTTS…SRSK, EIIP…SVLT, and ANQAKKNPLSNSGGLKQISPDLIKSNNINK. Residues 381 to 404 are compositionally biased toward polar residues; sequence NGGSPRTSNTPYQQQHQLSSQSMA. The segment covering 461–487 has biased composition (low complexity); it reads TTTTTTTTTNTTTTTTTTNTTPNNTTT. 2 stretches are compositionally biased toward pro residues: residues 494 to 510 and 547 to 560; these read PVPPKPNLIPRKLPPNP and QPPPPRKPTSPSPP. Polar residues predominate over residues 565–574; the sequence is KPTSKSDFIP. Low complexity-rich tracts occupy residues 575 to 597 and 613 to 629; these read STNNNLNNNNTTTTTSSLISIPK and IEEPINPNLNINSTTTT. Over residues 637 to 649 the composition is skewed to polar residues; the sequence is FKNNGTISSGSKS. Composition is skewed to low complexity over residues 650 to 663 and 683 to 694; these read NPNLQNLLNTNQPL and SKPITTTPTIKK. A compositionally biased stretch (pro residues) spans 708 to 721; sequence PPSPSSSSPSPPHN. Composition is skewed to low complexity over residues 754 to 772, 785 to 816, and 844 to 861; these read PTIPTQTTTASSSSTPTTP, PPINTSQTNNNISNSSIPSPKSKSALSLSTPK, and SSPTSSSPLQSPKISSPS. A compositionally biased stretch (polar residues) spans 880-890; sequence AKKNPLSNSGG.

The protein resides in the cytoplasm. Functionally, rho GTPase-activating protein involved in the signal transduction pathway. This is Rho GTPase-activating protein gacJ (gacJ) from Dictyostelium discoideum (Social amoeba).